Consider the following 249-residue polypeptide: Bacillaene synthase decarboxylase PksI (249 aa).

Residue histidine 230 is part of the active site.

The protein belongs to the enoyl-CoA hydratase/isomerase family. In terms of assembly, homotrimer. Does not form a heterotrimeric complex with PksH.

It is found in the cytoplasm. Its pathway is antibiotic biosynthesis; bacillaene biosynthesis. In terms of biological role, involved in some intermediate steps for the synthesis of the antibiotic polyketide bacillaene which is involved in secondary metabolism. Catalyzes the decarboxylation of the 3-methylglutaconyl group tethered to PksL to a 3-methylcrotonyl moiety. This chain is Bacillaene synthase decarboxylase PksI (pksI), found in Bacillus subtilis (strain 168).